The following is a 222-amino-acid chain: Ras-related protein Rab-21 (222 aa).

A2 is modified (N-acetylalanine). 10 residues coordinate GTP: G25, G28, K29, T30, S31, N42, D43, H45, T47, and T48. Residue T30 participates in Mg(2+) binding. The Switch 1 motif lies at 40–53 (KFNDKHITTLQASF). Mg(2+) contacts are provided by T48 and D71. The Switch 2 motif lies at 73 to 91 (AGQERFHALGPIYYRDSNG). Positions 74, 129, 130, 132, 160, and 161 each coordinate GTP. S-geranylgeranyl cysteine attachment occurs at residues C218 and C219. Residue C219 is modified to Cysteine methyl ester. The propeptide at 220-222 (SSG) is removed in mature form.

This sequence belongs to the small GTPase superfamily. Rab family. In terms of assembly, interacts with the cytoplasmic tail of integrins ITGA1, ITGA2, ITGA5, ITGA6, ITGA11 and ITGB1; this interaction is dependent upon its GDP/GTP cycle. Interacts with RABGEF1 (via VPS9 domain). Interacts with ANKRD27. Interacts (in GTP-bound form) with VAMP8 in response to starvation; the interaction probably regulates VAMP8 endolysosomal trafficking. Interacts (active GTP-bound form) with TMED10; the interaction is indirect and regulates TMED10 abundance and localization at the Golgi. It depends on Mg(2+) as a cofactor.

Its subcellular location is the endoplasmic reticulum membrane. The protein localises to the golgi apparatus. It localises to the trans-Golgi network. It is found in the golgi apparatus membrane. The protein resides in the early endosome membrane. Its subcellular location is the cytoplasmic vesicle membrane. The protein localises to the cleavage furrow. It localises to the cell projection. It is found in the neuron projection. The catalysed reaction is GTP + H2O = GDP + phosphate + H(+). With respect to regulation, regulated by guanine nucleotide exchange factors (GEFs) including ANKRD27 and RABGEF1, which promote the exchange of bound GDP for free GTP. Regulated by GTPase activating proteins (GAPs) which increase the GTP hydrolysis activity. Inhibited by GDP dissociation inhibitors (GDIs). Its function is as follows. The small GTPases Rab are key regulators of intracellular membrane trafficking, from the formation of transport vesicles to their fusion with membranes. Rabs cycle between an inactive GDP-bound form and an active GTP-bound form that is able to recruit to membranes different sets of downstream effectors directly responsible for vesicle formation, movement, tethering and fusion. RAB21 is involved in membrane trafficking control. Regulates integrin internalization and recycling, but does not influence the traffic of endosomally translocated receptors in general. As a result, may regulate cell adhesion and migration. During the mitosis of adherent cells, controls the endosomal trafficking of integrins which is required for the successful completion of cytokinesis. Involved in neurite growth. Following SBF2/MTMT13-mediated activation in response to starvation-induced autophagy, binds to and regulates SNARE protein VAMP8 endolysosomal transport required for SNARE-mediated autophagosome-lysosome fusion. Modulates protein levels of the cargo receptors TMED2 and TMED10, and required for appropriate Golgi localization of TMED10. This is Ras-related protein Rab-21 (RAB21) from Bos taurus (Bovine).